A 243-amino-acid chain; its full sequence is Pyridoxine 5'-phosphate synthase (243 aa).

3-amino-2-oxopropyl phosphate is bound at residue Asn7. 9-10 (DH) serves as a coordination point for 1-deoxy-D-xylulose 5-phosphate. Residue Arg18 participates in 3-amino-2-oxopropyl phosphate binding. Residue His43 is the Proton acceptor of the active site. 2 residues coordinate 1-deoxy-D-xylulose 5-phosphate: Arg45 and His50. Residue Glu70 is the Proton acceptor of the active site. Thr100 contacts 1-deoxy-D-xylulose 5-phosphate. Catalysis depends on His191, which acts as the Proton donor. 3-amino-2-oxopropyl phosphate-binding positions include Gly192 and 213–214 (GH).

Belongs to the PNP synthase family. In terms of assembly, homooctamer; tetramer of dimers.

It localises to the cytoplasm. The enzyme catalyses 3-amino-2-oxopropyl phosphate + 1-deoxy-D-xylulose 5-phosphate = pyridoxine 5'-phosphate + phosphate + 2 H2O + H(+). The protein operates within cofactor biosynthesis; pyridoxine 5'-phosphate biosynthesis; pyridoxine 5'-phosphate from D-erythrose 4-phosphate: step 5/5. Functionally, catalyzes the complicated ring closure reaction between the two acyclic compounds 1-deoxy-D-xylulose-5-phosphate (DXP) and 3-amino-2-oxopropyl phosphate (1-amino-acetone-3-phosphate or AAP) to form pyridoxine 5'-phosphate (PNP) and inorganic phosphate. The sequence is that of Pyridoxine 5'-phosphate synthase from Magnetococcus marinus (strain ATCC BAA-1437 / JCM 17883 / MC-1).